The following is a 432-amino-acid chain: Serine hydroxymethyltransferase 1 (432 aa).

(6S)-5,6,7,8-tetrahydrofolate contacts are provided by residues Leu-131 and 135–137; that span reads GHL. Lys-240 carries the post-translational modification N6-(pyridoxal phosphate)lysine.

This sequence belongs to the SHMT family. Homodimer. The cofactor is pyridoxal 5'-phosphate.

The protein resides in the cytoplasm. The enzyme catalyses (6R)-5,10-methylene-5,6,7,8-tetrahydrofolate + glycine + H2O = (6S)-5,6,7,8-tetrahydrofolate + L-serine. Its pathway is one-carbon metabolism; tetrahydrofolate interconversion. It participates in amino-acid biosynthesis; glycine biosynthesis; glycine from L-serine: step 1/1. In terms of biological role, catalyzes the reversible interconversion of serine and glycine with tetrahydrofolate (THF) serving as the one-carbon carrier. This reaction serves as the major source of one-carbon groups required for the biosynthesis of purines, thymidylate, methionine, and other important biomolecules. Also exhibits THF-independent aldolase activity toward beta-hydroxyamino acids, producing glycine and aldehydes, via a retro-aldol mechanism. This Rhodopseudomonas palustris (strain ATCC BAA-98 / CGA009) protein is Serine hydroxymethyltransferase 1.